The primary structure comprises 340 residues: Dihydroorotate dehydrogenase (quinone) (340 aa).

Residues 65 to 69 and Thr-89 each bind FMN; that span reads AGLDK. Lys-69 contributes to the substrate binding site. Residue 114-118 participates in substrate binding; it reads NRMGF. Asn-142 and Asn-175 together coordinate FMN. Asn-175 is a binding site for substrate. Ser-178 acts as the Nucleophile in catalysis. Position 180 (Asn-180) interacts with substrate. Positions 220 and 248 each coordinate FMN. 249 to 250 provides a ligand contact to substrate; that stretch reads NT. Residues Gly-271, Gly-300, and 321 to 322 contribute to the FMN site; that span reads YT.

Belongs to the dihydroorotate dehydrogenase family. Type 2 subfamily. As to quaternary structure, monomer. It depends on FMN as a cofactor.

Its subcellular location is the cell membrane. It catalyses the reaction (S)-dihydroorotate + a quinone = orotate + a quinol. It participates in pyrimidine metabolism; UMP biosynthesis via de novo pathway; orotate from (S)-dihydroorotate (quinone route): step 1/1. Its function is as follows. Catalyzes the conversion of dihydroorotate to orotate with quinone as electron acceptor. This chain is Dihydroorotate dehydrogenase (quinone), found in Paraburkholderia xenovorans (strain LB400).